Here is a 576-residue protein sequence, read N- to C-terminus: Protein O-linked-mannose beta-1,4-N-acetylglucosaminyltransferase 2 (576 aa).

The Cytoplasmic segment spans residues 1 to 4; sequence MNIS. A helical; Signal-anchor for type II membrane protein transmembrane segment spans residues 5–25; sequence AVFNALLVSIMAAVLWKHVKL. Over 26–576 the chain is Lumenal; sequence LEQFYVIEEE…PFAEVLVCNT (551 aa). N-linked (GlcNAc...) asparagine glycans are attached at residues N98, N275, N335, N451, N539, and N561. Positions 482 to 576 constitute a Fibronectin type-III domain; the sequence is RESKCQASAQ…PFAEVLVCNT (95 aa).

Belongs to the glycosyltransferase 61 family.

The protein localises to the endoplasmic reticulum membrane. It carries out the reaction 3-O-(alpha-D-mannosyl)-L-threonyl-[protein] + UDP-N-acetyl-alpha-D-glucosamine = 3-O-(N-acetyl-beta-D-glucosaminyl-(1-&gt;4)-alpha-D-mannosyl)-L-threonyl-[protein] + UDP + H(+). It functions in the pathway protein modification; protein glycosylation. O-linked mannose beta-1,4-N-acetylglucosaminyltransferase that transfers UDP-N-acetyl-D-glucosamine to the 4-position of the mannose to generate N-acetyl-D-glucosamine-beta-1,4-O-D-mannosylprotein. Involved in the biosynthesis of the phosphorylated O-mannosyl trisaccharide (N-acetylgalactosamine-beta-3-N-acetylglucosamine-beta-4-(phosphate-6-)mannose), a carbohydrate structure present in alpha-dystroglycan (DAG1), which is required for binding laminin G-like domain-containing extracellular proteins with high affinity. This chain is Protein O-linked-mannose beta-1,4-N-acetylglucosaminyltransferase 2 (pomgnt2), found in Xenopus tropicalis (Western clawed frog).